The sequence spans 550 residues: CTP synthase (550 aa).

The tract at residues 1–277 is amidoligase domain; it reads MNGSADAGPR…GRAVERALGL (277 aa). Residue serine 23 coordinates CTP. Residue serine 23 coordinates UTP. Residue 24–29 coordinates ATP; the sequence is SLGKGI. L-glutamine is bound at residue tyrosine 64. Aspartate 81 contributes to the ATP binding site. Mg(2+)-binding residues include aspartate 81 and glutamate 151. Residues 158-160, 198-203, and lysine 234 each bind CTP; these read DIE and KTKPTQ. UTP is bound by residues 198–203 and lysine 234; that span reads KTKPTQ. Valine 252 lines the ATP pocket. The Glutamine amidotransferase type-1 domain occupies 302–549; the sequence is KIAIAGKYVK…VEAALAYQER (248 aa). L-glutamine is bound at residue glycine 364. Cysteine 391 (nucleophile; for glutamine hydrolysis) is an active-site residue. L-glutamine contacts are provided by residues 392–395, glutamate 415, and arginine 472; that span reads LGLQ. Active-site residues include histidine 522 and glutamate 524.

Belongs to the CTP synthase family. As to quaternary structure, homotetramer in the presence of UTP and ATP. Is in a protein concentration-dependent equilibrium between monomer, dimer, and tetramer in the absence of UTP and ATP.

It carries out the reaction UTP + L-glutamine + ATP + H2O = CTP + L-glutamate + ADP + phosphate + 2 H(+). It catalyses the reaction L-glutamine + H2O = L-glutamate + NH4(+). The catalysed reaction is UTP + NH4(+) + ATP = CTP + ADP + phosphate + 2 H(+). Its pathway is pyrimidine metabolism; CTP biosynthesis via de novo pathway; CTP from UDP: step 2/2. With respect to regulation, allosterically activated by GTP, when glutamine is the substrate. GTP has no effect on the reaction when ammonia is the substrate. The allosteric effector GTP functions by stabilizing the protein conformation that binds the tetrahedral intermediate(s) formed during glutamine hydrolysis. Inhibited by the product CTP, via allosteric rather than competitive inhibition. Catalyzes the ATP-dependent amination of UTP to CTP with either L-glutamine or ammonia as the source of nitrogen. Regulates intracellular CTP levels through interactions with the four ribonucleotide triphosphates. In Thermus thermophilus (strain ATCC 27634 / DSM 579 / HB8), this protein is CTP synthase.